Consider the following 1150-residue polypeptide: RNA polymerase-associated protein CTR9 (1150 aa).

13 TPR repeats span residues 143–176 (VRAWFYLFERDKSTNKYELADQQFNYVVKTNPKN), 177–210 (VLPLIGKAVIAFNKKDYKTAIYYFRKAIRQCRHT), 212–245 (ADLRVGIGHCFAKMGMMDKAKTAFERAMEIEPYN), 247–282 (SAMCGLGIILLNTYDHDSLKHAVSLFGRSYNLQTDH), 320–353 (AEAFYQMGRCRHAQGQFDGAYKYYYQARQANNGE), 355–388 (TLAHYGLGQMYIHRNEIEEAIKCFDTVHKRLPNN), 432–464 (YEACIDLAQLLEATDPKRSLELYENAIDLLVTN), 471–504 (PEMLNNVGALYMSMKQYEKAEHHFKRAKERLEEQ), 594–627 (PIVWTLIGNLHFAKNEWMPAQKKFEFILSKIFNN), 643–677 (FEQLLNPSRKKEDEKKYIDRALQMYQKALKLQPKN), 679–711 (YAANGIGCVLAYKRNWNDARDVFSQVRESTSEF), 712–745 (YDVWLNIAHVCMEREQWMAAVQMYSSAMKKFRKE), and 748–781 (STLQHYLAKAYYRANMLNEAKEALECAMLDQLDN). Coiled-coil stretches lie at residues 848–916 (AEEA…NLRL) and 972–1028 (ERRE…AKQS). Positions 935–1150 (KRRGGGGRKR…KKKVIESDSD (216 aa)) are disordered. Positions 975-992 (ERRKKDKAAKKASRKKRE) are enriched in basic residues. 4 stretches are compositionally biased toward basic and acidic residues: residues 993-1005 (RRDSGGPDSNRRD), 1013-1024 (EERDRKLQEKLS), 1060-1084 (DPRPPVDEFDSPTRTDSDSDRETTT), and 1132-1150 (RDSDGSDAPKKKVIESDSD).

In terms of assembly, component of the PAF1 complex which consists of at least cdc-73, ctr-9, leo-1, pafo-1 and rtfo-1.

The protein resides in the nucleus. Functionally, component of the PAF1 complex which is a multifunctional complex involved in transcription initiation via genetic interactions with TATA-binding proteins, elongation and transcription-coupled histone modification. Ctr-9 is required for epidermal microtubule organization during morphogenesis. In Caenorhabditis elegans, this protein is RNA polymerase-associated protein CTR9.